The chain runs to 349 residues: Probable esterase Cgl0839 (349 aa).

The 270-residue stretch at Gly60–Phe329 folds into the AB hydrolase-1 domain. Ser142 acts as the Nucleophile in catalysis. Active-site residues include Asp296 and His325.

This sequence belongs to the AB hydrolase superfamily. Acetyl esterase family. As to quaternary structure, homodimer.

Functionally, esterase that catalyzes the hydrolysis of 4-nitrophenyl acetate in vitro. The chain is Probable esterase Cgl0839 from Corynebacterium glutamicum (strain ATCC 13032 / DSM 20300 / JCM 1318 / BCRC 11384 / CCUG 27702 / LMG 3730 / NBRC 12168 / NCIMB 10025 / NRRL B-2784 / 534).